The primary structure comprises 191 residues: Molybdenum cofactor guanylyltransferase (191 aa).

Residues 11-13, Lys23, Asp66, and Asp97 contribute to the GTP site; that span reads LCG. Asp97 provides a ligand contact to Mg(2+).

Belongs to the MobA family. Monomer. Requires Mg(2+) as cofactor.

The protein localises to the cytoplasm. The catalysed reaction is Mo-molybdopterin + GTP + H(+) = Mo-molybdopterin guanine dinucleotide + diphosphate. In terms of biological role, transfers a GMP moiety from GTP to Mo-molybdopterin (Mo-MPT) cofactor (Moco or molybdenum cofactor) to form Mo-molybdopterin guanine dinucleotide (Mo-MGD) cofactor. The protein is Molybdenum cofactor guanylyltransferase of Campylobacter jejuni subsp. jejuni serotype O:6 (strain 81116 / NCTC 11828).